The sequence spans 158 residues: MTLALALYEPDIAQNAGTLARAVACLGLELHIVEPAGFPVGDAGFRRAGMDYLDRAVIRRHASFKAFEEWRRAEGRRLVLATTRGAVAHVDFAFTETDVVLLGRESAGVPEAVHESADARIVIPLNEGARSLNVALAGAMILGEALRQTGGFARTGTG.

Positions 103, 123, and 131 each coordinate S-adenosyl-L-methionine.

The protein belongs to the class IV-like SAM-binding methyltransferase superfamily. RNA methyltransferase TrmH family. TrmL subfamily. As to quaternary structure, homodimer.

It localises to the cytoplasm. It carries out the reaction cytidine(34) in tRNA + S-adenosyl-L-methionine = 2'-O-methylcytidine(34) in tRNA + S-adenosyl-L-homocysteine + H(+). The enzyme catalyses 5-carboxymethylaminomethyluridine(34) in tRNA(Leu) + S-adenosyl-L-methionine = 5-carboxymethylaminomethyl-2'-O-methyluridine(34) in tRNA(Leu) + S-adenosyl-L-homocysteine + H(+). Methylates the ribose at the nucleotide 34 wobble position in the two leucyl isoacceptors tRNA(Leu)(CmAA) and tRNA(Leu)(cmnm5UmAA). Catalyzes the methyl transfer from S-adenosyl-L-methionine to the 2'-OH of the wobble nucleotide. In Ancylobacter novellus (strain ATCC 8093 / DSM 506 / JCM 20403 / CCM 1077 / IAM 12100 / NBRC 12443 / NCIMB 10456) (Starkeya novella), this protein is tRNA (cytidine(34)-2'-O)-methyltransferase.